The following is a 294-amino-acid chain: Sarcotoxin-2A (294 aa).

The first 22 residues, 1–22 (MKSFVFFAACMAIIALSSLVQA), serve as a signal peptide directing secretion. Residues 23-24 (YP) constitute a propeptide, removed by a dipeptidylpeptidase. The residue at position 25 (glutamine 25) is a Pyrrolidone carboxylic acid. Arginine 293 carries the arginine amide modification.

The protein belongs to the attacin/sarcotoxin-2 family. Synthesized by the fat body and is eventually secreted into the hemolymph.

The protein resides in the secreted. Sarcotoxin II is an antibacterial protein which plays a role in the inflammatory response of this insect. The main effect of sarcotoxin II on E.coli may be the inhibition of cell wall synthesis, including septum formation. In Sarcophaga peregrina (Flesh fly), this protein is Sarcotoxin-2A.